A 195-amino-acid polypeptide reads, in one-letter code: Guanylate kinase (195 aa).

The Guanylate kinase-like domain maps to 10–189 (GRLIVFSAPS…TVDAVATRIA (180 aa)). An ATP-binding site is contributed by 17-24 (APSGTGKS).

The protein belongs to the guanylate kinase family.

Its subcellular location is the cytoplasm. The enzyme catalyses GMP + ATP = GDP + ADP. In terms of biological role, essential for recycling GMP and indirectly, cGMP. The protein is Guanylate kinase of Chlorobaculum tepidum (strain ATCC 49652 / DSM 12025 / NBRC 103806 / TLS) (Chlorobium tepidum).